The following is a 1229-amino-acid chain: MIARVCRLTKHSKPPHLPITLTTPTLFLVVLVLLQLHPICVLVNVDDGGGVTVKAISLLYSRKWNVKVINAVNAGLNASLAARNWTVAPGVNVEVVRPPSYDIDPAQFLDVYLKVLNDDKSLLVVLGPMGNDDAEKLYDTLEENRLVGFGPMTVSTRHEGYMPHLYFLRPEATGESYCPSTLCGESLRVLRQGFMYLDGLLGGSEAYDHAVDFISRMGYSFCCVFTVEDKAGGQGGSSEEFDAVWDEFAGGNPQAVIMFATMKPDAKKFLVRLVSDPRTEDTFVLTPIFLQKSIVSIWKETLEEANVPLHPHRVIQTGSNPLAKEDYIDAIKRFQTEMRNYLTEYKEWSGFNDADHFLKNDADGELMVNGWIAGEVLRRALRSHGWMNTATAFLESLYEQRRYVIDDIVVGDFGGECDSFTSANGATCRCNRGGKNVYMREIAEDYRLQPLVGGHIMTTPLQCHIDPSILRPPLTGLTVDMEDHEELLRGSTQFETGVSTTTSSGKAGEMNSFFLQKVVTDTQKVSNELNTLRQERIVTAVFGIVTKAVLGLPGLTFIDPITPTPHLNSFSRNVIHLSPTLEQQLYVLVNYLSSIRADFPNCVIRGGEAPAIIDALRKTLVTFGLNLSSTVVLTPGDTVGEHLPKSGITFIIGLAVDDIVVIEEHLRIHTKARVLVQFSDIALLYNEFVQAFNNSDGAKHLLFATSLPHWADVDTTSETVRRFHEAVREVEKWTPLSLLGFTTGRLIQENLQNMERVTSDLLVDLFFNQTVITIDDMHYGPYKHYDCIINGVVTADDCMANFGATDISVWSMARALRSDEPLLQNPMSPSLVYTVPNGNALTPAQLAGVVGGSLFVVALAICLSVLACFTLRGTRDNDSAPKEPTGPVTLIFTDIESSTALWAAHPDLMPDAVATHHRLIRSLITRYECYEVKTVGDSFMIASKSPFAAVQLAQELQLRFLRLDWETNALDESYREFEEQRAEGECEYTPPTAHMDPEVYSRLWNGLRVRVGIHTGLCDIRYDEVTKGYDYYGRTSNMAARTESVANGGQVLMTHAAYMSLSGEDRNQLDVTTLGATVLRGVPEPVRMYQLNAVPGRNFAALRLDRELFNDGEDETTTSCSDHSSLRAELSIAAQTIAASLQSLLGTFTPAQRQKALTPFCERCGVTLPRKMGHVWDNDSCQEVIRRIAAKVGHVVDRHAAETRERSVCTLSSGSVIIISNDLSDMIRV.

The Cytoplasmic segment spans residues 1–24 (MIARVCRLTKHSKPPHLPITLTTP). Residues 25 to 45 (TLFLVVLVLLQLHPICVLVNV) form a helical membrane-spanning segment. The Extracellular portion of the chain corresponds to 46–845 (DDGGGVTVKA…PNGNALTPAQ (800 aa)). Asn-77, Asn-84, Asn-626, Asn-693, and Asn-768 each carry an N-linked (GlcNAc...) asparagine glycan. Residues 846–866 (LAGVVGGSLFVVALAICLSVL) traverse the membrane as a helical segment. Over 867-1229 (ACFTLRGTRD…SNDLSDMIRV (363 aa)) the chain is Cytoplasmic. One can recognise a Guanylate cyclase domain in the interval 889–1043 (TLIFTDIESS…RTSNMAARTE (155 aa)). Asp-894 and Asp-937 together coordinate Mg(2+).

The protein belongs to the adenylyl cyclase class-3 family. Requires Mg(2+) as cofactor.

The protein localises to the membrane. It carries out the reaction ATP = 3',5'-cyclic AMP + diphosphate. In terms of biological role, could act as a receptor for an unknown ligand. The polypeptide is Receptor-type adenylate cyclase GRESAG 4.3 (GRESAG 4.3) (Trypanosoma brucei brucei).